A 201-amino-acid chain; its full sequence is Musculin (201 aa).

Disordered regions lie at residues 1-108 (MSTG…NAAN) and 182-201 (RPDS…GTSA). Positions 46 to 56 (SAEEEDGEEEP) are enriched in acidic residues. Positions 66 to 71 (KRKRLR) match the Nuclear localization signal motif. Gly residues predominate over residues 74–86 (DAGGAGGRAGGAG). The 53-residue stretch at 102–154 (SQRNAANARERARMRVLSKAFSRLKTSLPWVPPDTKLSKLDTLRLASSYIAHL) folds into the bHLH domain.

As to quaternary structure, efficient DNA binding requires dimerization with another bHLH protein. Binds DNA as a homodimer or a heterodimer. Forms a heterodimer with TCF3.

It localises to the nucleus. Transcription repressor that blocks myogenesis and activation of E-box dependent muscle genes. The chain is Musculin (Msc) from Mus musculus (Mouse).